A 280-amino-acid polypeptide reads, in one-letter code: Energy-coupling factor transporter ATP-binding protein EcfA1 (280 aa).

One can recognise an ABC transporter domain in the interval 7–241 (IEVAHLKYEY…GQRLLDLGLD (235 aa)). 41-48 (GHNGSGKS) serves as a coordination point for ATP.

Belongs to the ABC transporter superfamily. Energy-coupling factor EcfA family. In terms of assembly, forms a stable energy-coupling factor (ECF) transporter complex composed of 2 membrane-embedded substrate-binding proteins (S component), 2 ATP-binding proteins (A component) and 2 transmembrane proteins (T component).

It is found in the cell membrane. ATP-binding (A) component of a common energy-coupling factor (ECF) ABC-transporter complex. Unlike classic ABC transporters this ECF transporter provides the energy necessary to transport a number of different substrates. In Latilactobacillus sakei subsp. sakei (strain 23K) (Lactobacillus sakei subsp. sakei), this protein is Energy-coupling factor transporter ATP-binding protein EcfA1.